A 277-amino-acid polypeptide reads, in one-letter code: uncharacterized protein (277 aa).

Disordered stretches follow at residues Pro1 to Pro103 and Pro254 to Arg277. Positions Arg48–Thr65 are enriched in basic and acidic residues. Polar residues predominate over residues Pro66 to Val77. The segment covering Pro82–Gln91 has biased composition (basic residues).

This is an uncharacterized protein from Homo sapiens (Human).